The following is a 523-amino-acid chain: Cytoplasmic dynein 1 light intermediate chain 1 (523 aa).

A disordered region spans residues methionine 1 to proline 25. Residues serine 9 to serine 19 are compositionally biased toward low complexity. Glycine 74 to threonine 81 contributes to the ATP binding site. Phosphoserine is present on serine 207. Threonine 213 is subject to Phosphothreonine. 2 disordered regions span residues proline 387–methionine 434 and threonine 456–serine 523. Residues serine 398 and serine 405 each carry the phosphoserine modification. Threonine 408 carries the post-translational modification Phosphothreonine. 4 positions are modified to phosphoserine: serine 412, serine 419, serine 421, and serine 427. Residues serine 412–serine 421 show a composition bias toward low complexity. The span at serine 458–serine 478 shows a compositional bias: gly residues. Serine 487 bears the Phosphoserine mark. Residues leucine 493–threonine 503 are compositionally biased toward basic and acidic residues. Low complexity predominate over residues proline 506–serine 523. Serine 510 bears the Phosphoserine mark. Phosphothreonine is present on residues threonine 512, threonine 513, and threonine 515. Residue serine 516 is modified to Phosphoserine.

This sequence belongs to the dynein light intermediate chain family. As to quaternary structure, homodimer. The cytoplasmic dynein 1 complex consists of two catalytic heavy chains (HCs) and a number of non-catalytic subunits presented by intermediate chains (ICs), light intermediate chains (LICs) and light chains (LCs); the composition seems to vary in respect to the IC, LIC and LC composition. The heavy chain homodimer serves as a scaffold for the probable homodimeric assembly of the respective non-catalytic subunits. The ICs and LICs bind directly to the HC dimer and the LCs assemble on the IC dimer. Self-associates. Interacts with DYNC1H1; DYNC1LI1 and DYNC1LI2 bind mutually exclusive to DYNC1H1. Interacts with PCNT. Forms a complex with RAB11FIP3 and RAB11A1; the interaction between DYNC1LI1 and RAB11FIP3 is direct and induces DYNC1LI1 localization onto endosomal membrane; the complex regulates endocytic trafficking. Interacts with RUFY3. (Microbial infection) Interacts with human adenovirus 5 hexon protein; this interaction probably allows virus intracellular transport. Post-translationally, phosphorylated during mitosis but not in interphase.

It localises to the cytoplasm. It is found in the chromosome. Its subcellular location is the centromere. The protein resides in the kinetochore. The protein localises to the cytoskeleton. It localises to the spindle pole. It is found in the recycling endosome membrane. Its function is as follows. Acts as one of several non-catalytic accessory components of the cytoplasmic dynein 1 complex that are thought to be involved in linking dynein to cargos and to adapter proteins that regulate dynein function. Cytoplasmic dynein 1 acts as a motor for the intracellular retrograde motility of vesicles and organelles along microtubules. May play a role in binding dynein to membranous organelles or chromosomes. Probably involved in the microtubule-dependent transport of pericentrin. Is required for progress through the spindle assembly checkpoint. The phosphorylated form appears to be involved in the selective removal of MAD1L1 and MAD1L2 but not BUB1B from kinetochores. Forms a functional Rab11/RAB11FIP3/dynein complex onto endosomal membrane that regulates the movement of peripheral sorting endosomes (SE) along microtubule tracks toward the microtubule organizing center/centrosome, generating the endosomal recycling compartment (ERC). The polypeptide is Cytoplasmic dynein 1 light intermediate chain 1 (DYNC1LI1) (Homo sapiens (Human)).